Reading from the N-terminus, the 64-residue chain is U2-aranetoxin-Av1a (64 aa).

In terms of tissue distribution, expressed in fat body, but not in cephalothorax, silk gland, midgut.

Functionally, insecticidal toxin. The polypeptide is U2-aranetoxin-Av1a (Araneus ventricosus (Orbweaver spider)).